Here is a 447-residue protein sequence, read N- to C-terminus: Methyl-coenzyme M reductase I subunit beta (447 aa).

Tyrosine 371 contributes to the coenzyme M binding site. Glycine 373 serves as a coordination point for coenzyme B.

It belongs to the methyl-coenzyme M reductase beta subunit family. MCR is a hexamer of two alpha, two beta, and two gamma chains, forming a dimer of heterotrimers. The cofactor is coenzyme F430.

The protein resides in the cytoplasm. It catalyses the reaction coenzyme B + methyl-coenzyme M = methane + coenzyme M-coenzyme B heterodisulfide. Its pathway is one-carbon metabolism; methyl-coenzyme M reduction; methane from methyl-coenzyme M: step 1/1. Component of the methyl-coenzyme M reductase (MCR) I that catalyzes the reductive cleavage of methyl-coenzyme M (CoM-S-CH3 or 2-(methylthio)ethanesulfonate) using coenzyme B (CoB or 7-mercaptoheptanoylthreonine phosphate) as reductant which results in the production of methane and the mixed heterodisulfide of CoB and CoM (CoM-S-S-CoB). This is the final step in methanogenesis. The chain is Methyl-coenzyme M reductase I subunit beta (mcrB) from Methanocaldococcus jannaschii (strain ATCC 43067 / DSM 2661 / JAL-1 / JCM 10045 / NBRC 100440) (Methanococcus jannaschii).